A 159-amino-acid chain; its full sequence is MITKAIYPGTFDPITNGHLDLVTRASAMFSHVILAIADSSSKKPMFTLDERVALAKKVTAPLKNVEVLGFSELMAEFAKKHNANILVRGLRSVSDFEYEWQLANMNRHLMPKLESVFLIPSEKWSFISSSLVKEVARHGGDITPFLPKPVTKALLAKLA.

Residue T10 participates in substrate binding. ATP-binding positions include 10 to 11 (TF) and H18. Substrate-binding residues include K42, M74, and R88. Residues 89 to 91 (GLR), E99, and 124 to 130 (WSFISSS) contribute to the ATP site.

This sequence belongs to the bacterial CoaD family. In terms of assembly, homohexamer. Mg(2+) serves as cofactor.

Its subcellular location is the cytoplasm. It carries out the reaction (R)-4'-phosphopantetheine + ATP + H(+) = 3'-dephospho-CoA + diphosphate. The protein operates within cofactor biosynthesis; coenzyme A biosynthesis; CoA from (R)-pantothenate: step 4/5. Its function is as follows. Reversibly transfers an adenylyl group from ATP to 4'-phosphopantetheine, yielding dephospho-CoA (dPCoA) and pyrophosphate. This is Phosphopantetheine adenylyltransferase from Yersinia pestis.